We begin with the raw amino-acid sequence, 274 residues long: (R)-stereoselective amidase (274 aa).

Residues 1-234 enclose the CN hydrolase domain; the sequence is MKIELVQLAG…EVRHVVELDL (234 aa). Residue Glu-40 is the Proton acceptor of the active site. Residue Lys-108 is the Proton donor of the active site. Cys-140 (nucleophile) is an active-site residue.

As to quaternary structure, monomer.

The catalysed reaction is (R)-piperazine-2-carboxamide + H2O = (R)-piperazine-2-carboxylate + NH4(+). It carries out the reaction beta-alaninamide + H2O = beta-alanine + NH4(+). Its activity is regulated as follows. Completely inhibited by p-chloromercuribenzoate, N-ethylmaleimide, MnSO(4), MnCl(2), CoCl(2), NiCl(2), CuSO(4), CuCl(2), ZnSO(4), ZnCl(2), AgNO(3), CdCl(2), HgCl(2) and PbCl(2). Partially inhibited by FeCl(3) and Fe(NH(4))(2)(SO(4))(2). Slightly enhanced by dithiothreitol. Unaffected by LiBr, H(2)BO(3), NaCl, MgSO(4), MgCl(2), AlCl(3), KCl, CaCl(2), CrCl(3), RbCl, Na(2)MoO(4), (NH(4))(6)Mo(7)O(24), CsCl and BaCl(2). Unaffected by the chelating agents o-phenanthroline, 8-hydroxyquinoline, enthylenediaminetetraacetic acid and alpha,alpha'-dipyridyl. Not inhibited by the carbonyl reagents hydroxylamine, phenylhydrazine, hydrazine, D,L-penicillamine and D-cycloserine. Not affected by the serine protease inhibitor phenylmethanesulfonyl fluoride, the serine/cysteine protease inhibitor leupeptine or the aspartic protease inhibitor pepstatin. Hydrolyzes (R)-piperazine-2-carboxamide and (R)-piperazine-2-tert-butylcarboxamide with strict R-stereoselectivity. Also active towards beta-alaninamide, piperidine-3-carboxmide, D-glutaminamide and slightly active towards L-glutaminamide and piperidine-4-carboxamide. The protein is (R)-stereoselective amidase of Pseudomonas sp.